The primary structure comprises 218 residues: tRNA (guanine-N(7)-)-methyltransferase (218 aa).

Positions methionine 1–proline 26 are disordered. The segment covering valine 13–proline 26 has biased composition (basic and acidic residues). The S-adenosyl-L-methionine site is built by glutamate 45, glutamate 70, aspartate 97, and aspartate 119. Residue aspartate 119 is part of the active site. Residue lysine 123 coordinates substrate. The tract at residues arginine 125–arginine 130 is interaction with RNA. Substrate contacts are provided by residues aspartate 155 and threonine 195–glutamate 198.

The protein belongs to the class I-like SAM-binding methyltransferase superfamily. TrmB family.

It catalyses the reaction guanosine(46) in tRNA + S-adenosyl-L-methionine = N(7)-methylguanosine(46) in tRNA + S-adenosyl-L-homocysteine. It participates in tRNA modification; N(7)-methylguanine-tRNA biosynthesis. Functionally, catalyzes the formation of N(7)-methylguanine at position 46 (m7G46) in tRNA. The polypeptide is tRNA (guanine-N(7)-)-methyltransferase (Lactobacillus delbrueckii subsp. bulgaricus (strain ATCC 11842 / DSM 20081 / BCRC 10696 / JCM 1002 / NBRC 13953 / NCIMB 11778 / NCTC 12712 / WDCM 00102 / Lb 14)).